An 800-amino-acid chain; its full sequence is Leukocyte receptor cluster member 8 homolog (800 aa).

5 disordered regions span residues 118–149, 175–229, 245–273, 335–394, and 407–519; these read NYQS…MSYS, PCIQ…GFKF, SSEH…PQQQ, TIDW…GRGS, and KESS…HGHG. Low complexity-rich tracts occupy residues 120-131 and 184-201; these read QSMSSQSGQHQG and NQSN…SQQS. Polar residues predominate over residues 252-261; it reads SAGQQQQQAT. Basic and acidic residues predominate over residues 338–352; that stretch reads WSREPLPGKDGGKES. Residues 360–387 are compositionally biased toward polar residues; sequence QTTLQTSHGSTITITQSPRGGGNSTNAA. A compositionally biased stretch (low complexity) spans 409–418; the sequence is SSSSSSAGSR. Composition is skewed to basic residues over residues 419-433 and 508-519; these read SRSR…RRYR and EKRAARFQHGHG. Positions 636-800 constitute a PCI domain; it reads DHEEFNQCQA…KLSLAVLPNI (165 aa).

This chain is Leukocyte receptor cluster member 8 homolog (leng8), found in Xenopus laevis (African clawed frog).